Reading from the N-terminus, the 527-residue chain is Peptide chain release factor 3 (527 aa).

The region spanning 9 to 277 is the tr-type G domain; the sequence is AKRRTFAIIS…CIVDWAPQPL (269 aa). Residues 18–25, 86–90, and 140–143 contribute to the GTP site; these read SHPDAGKT, DTPGH, and NKLD.

This sequence belongs to the TRAFAC class translation factor GTPase superfamily. Classic translation factor GTPase family. PrfC subfamily.

The protein resides in the cytoplasm. Functionally, increases the formation of ribosomal termination complexes and stimulates activities of RF-1 and RF-2. It binds guanine nucleotides and has strong preference for UGA stop codons. It may interact directly with the ribosome. The stimulation of RF-1 and RF-2 is significantly reduced by GTP and GDP, but not by GMP. The sequence is that of Peptide chain release factor 3 from Pseudomonas aeruginosa (strain LESB58).